The following is a 435-amino-acid chain: Trigger factor (435 aa).

The 86-residue stretch at 163–248 folds into the PPIase FKBP-type domain; it reads GDFVTFDFKG…IKEIKVKELP (86 aa).

The protein belongs to the FKBP-type PPIase family. Tig subfamily.

The protein resides in the cytoplasm. The catalysed reaction is [protein]-peptidylproline (omega=180) = [protein]-peptidylproline (omega=0). In terms of biological role, involved in protein export. Acts as a chaperone by maintaining the newly synthesized protein in an open conformation. Functions as a peptidyl-prolyl cis-trans isomerase. This Citrifermentans bemidjiense (strain ATCC BAA-1014 / DSM 16622 / JCM 12645 / Bem) (Geobacter bemidjiensis) protein is Trigger factor.